We begin with the raw amino-acid sequence, 473 residues long: tRNA-2-methylthio-N(6)-dimethylallyladenosine synthase (473 aa).

One can recognise an MTTase N-terminal domain in the interval 3–120 (MKLHVKTWGC…LPEMIKEVQE (118 aa)). The [4Fe-4S] cluster site is built by Cys-12, Cys-49, Cys-83, Cys-157, Cys-161, and Cys-164. In terms of domain architecture, Radical SAM core spans 143–375 (KADGATAFVS…QDRIQQQSQG (233 aa)). Positions 378–441 (RKMVGSVQRI…TNSIRGKFIR (64 aa)) constitute a TRAM domain.

The protein belongs to the methylthiotransferase family. MiaB subfamily. In terms of assembly, monomer. [4Fe-4S] cluster is required as a cofactor.

It is found in the cytoplasm. It carries out the reaction N(6)-dimethylallyladenosine(37) in tRNA + (sulfur carrier)-SH + AH2 + 2 S-adenosyl-L-methionine = 2-methylsulfanyl-N(6)-dimethylallyladenosine(37) in tRNA + (sulfur carrier)-H + 5'-deoxyadenosine + L-methionine + A + S-adenosyl-L-homocysteine + 2 H(+). In terms of biological role, catalyzes the methylthiolation of N6-(dimethylallyl)adenosine (i(6)A), leading to the formation of 2-methylthio-N6-(dimethylallyl)adenosine (ms(2)i(6)A) at position 37 in tRNAs that read codons beginning with uridine. This chain is tRNA-2-methylthio-N(6)-dimethylallyladenosine synthase, found in Psychromonas ingrahamii (strain DSM 17664 / CCUG 51855 / 37).